An 89-amino-acid chain; its full sequence is Cell division topological specificity factor (89 aa).

This sequence belongs to the MinE family.

Its function is as follows. Prevents the cell division inhibition by proteins MinC and MinD at internal division sites while permitting inhibition at polar sites. This ensures cell division at the proper site by restricting the formation of a division septum at the midpoint of the long axis of the cell. This chain is Cell division topological specificity factor, found in Serratia proteamaculans (strain 568).